The sequence spans 476 residues: Alkaline phosphatase H (476 aa).

An N-terminal signal peptide occupies residues 1–26; that stretch reads MTPGYPLALSLAVSMAVLGSALPAQA. A Mg(2+)-binding site is contributed by aspartate 77. Zn(2+) is bound at residue aspartate 77. Serine 128 serves as the catalytic Phosphoserine intermediate. Serine 128 carries the post-translational modification Phosphoserine. Residues aspartate 179 and threonine 181 each coordinate Mg(2+). The residue at position 206 (serine 206) is a Phosphoserine. Glutamine 346 serves as a coordination point for Mg(2+). Positions 353, 357, 395, 396, and 438 each coordinate Zn(2+).

It belongs to the alkaline phosphatase family. Mg(2+) serves as cofactor. The cofactor is Zn(2+).

It localises to the secreted. Its subcellular location is the periplasm. The enzyme catalyses a phosphate monoester + H2O = an alcohol + phosphate. Its function is as follows. Has only phosphomonoesterase activity. This chain is Alkaline phosphatase H (phoA), found in Pseudomonas aeruginosa (strain UCBPP-PA14).